Consider the following 163-residue polypeptide: Crossover junction endodeoxyribonuclease RuvC (163 aa).

Catalysis depends on residues Asp7, Glu67, and Asp140. Residues Asp7, Glu67, and Asp140 each contribute to the Mg(2+) site.

This sequence belongs to the RuvC family. Homodimer which binds Holliday junction (HJ) DNA. The HJ becomes 2-fold symmetrical on binding to RuvC with unstacked arms; it has a different conformation from HJ DNA in complex with RuvA. In the full resolvosome a probable DNA-RuvA(4)-RuvB(12)-RuvC(2) complex forms which resolves the HJ. Requires Mg(2+) as cofactor.

It localises to the cytoplasm. The enzyme catalyses Endonucleolytic cleavage at a junction such as a reciprocal single-stranded crossover between two homologous DNA duplexes (Holliday junction).. In terms of biological role, the RuvA-RuvB-RuvC complex processes Holliday junction (HJ) DNA during genetic recombination and DNA repair. Endonuclease that resolves HJ intermediates. Cleaves cruciform DNA by making single-stranded nicks across the HJ at symmetrical positions within the homologous arms, yielding a 5'-phosphate and a 3'-hydroxyl group; requires a central core of homology in the junction. The consensus cleavage sequence is 5'-(A/T)TT(C/G)-3'. Cleavage occurs on the 3'-side of the TT dinucleotide at the point of strand exchange. HJ branch migration catalyzed by RuvA-RuvB allows RuvC to scan DNA until it finds its consensus sequence, where it cleaves and resolves the cruciform DNA. The polypeptide is Crossover junction endodeoxyribonuclease RuvC (Petrotoga mobilis (strain DSM 10674 / SJ95)).